Here is an 87-residue protein sequence, read N- to C-terminus: Elongation factor Ts, chloroplastic (87 aa).

It belongs to the EF-Ts family.

The protein localises to the plastid. Its subcellular location is the chloroplast. Its function is as follows. Associates with the EF-Tu.GDP complex and induces the exchange of GDP to GTP. It remains bound to the aminoacyl-tRNA.EF-Tu.GTP complex up to the GTP hydrolysis stage on the ribosome. The sequence is that of Elongation factor Ts, chloroplastic (tsf) from Antithamnion sp. (Red alga).